Reading from the N-terminus, the 125-residue chain is Histone H1-like protein Hc1 (125 aa).

Residues 98–125 are disordered; sequence TKAKVKPTKKAAPKTKVKTAKKTRSTKK. Residues 100-125 are compositionally biased toward basic residues; that stretch reads AKVKPTKKAAPKTKVKTAKKTRSTKK.

The protein belongs to the histone H1/H5 family. HCT subfamily.

In terms of biological role, might have a role analogous to that of eukaryotic histone proteins. The sequence is that of Histone H1-like protein Hc1 (hctA) from Chlamydia trachomatis serovar L2 (strain ATCC VR-902B / DSM 19102 / 434/Bu).